The sequence spans 505 residues: Lysine--tRNA ligase (505 aa).

2 residues coordinate Mg(2+): Glu415 and Glu422.

Belongs to the class-II aminoacyl-tRNA synthetase family. In terms of assembly, homodimer. Requires Mg(2+) as cofactor.

Its subcellular location is the cytoplasm. It catalyses the reaction tRNA(Lys) + L-lysine + ATP = L-lysyl-tRNA(Lys) + AMP + diphosphate. The chain is Lysine--tRNA ligase from Edwardsiella ictaluri (strain 93-146).